A 149-amino-acid polypeptide reads, in one-letter code: UPF0178 protein CPR_2251 (149 aa).

This sequence belongs to the UPF0178 family.

This Clostridium perfringens (strain SM101 / Type A) protein is UPF0178 protein CPR_2251.